The sequence spans 212 residues: uncharacterized protein (212 aa).

Positions Leu46–Ile198 constitute an SIS domain.

Belongs to the SIS family. PHI subfamily.

This is an uncharacterized protein from Aeropyrum pernix (strain ATCC 700893 / DSM 11879 / JCM 9820 / NBRC 100138 / K1).